A 231-amino-acid polypeptide reads, in one-letter code: LexA repressor (231 aa).

The H-T-H motif DNA-binding region spans 28–48 (IREIGEALDIRSTNGVNDHLK). Active-site for autocatalytic cleavage activity residues include Ser-149 and Lys-186.

The protein belongs to the peptidase S24 family. As to quaternary structure, homodimer.

The enzyme catalyses Hydrolysis of Ala-|-Gly bond in repressor LexA.. Its function is as follows. Represses a number of genes involved in the response to DNA damage (SOS response), including recA and lexA. In the presence of single-stranded DNA, RecA interacts with LexA causing an autocatalytic cleavage which disrupts the DNA-binding part of LexA, leading to derepression of the SOS regulon and eventually DNA repair. This Anaeromyxobacter sp. (strain Fw109-5) protein is LexA repressor.